The following is a 332-amino-acid chain: Cyclin-dependent kinase 1 (332 aa).

A Protein kinase domain is found at 22–312; sequence FTKLEKIGEG…AKKALVHPYF (291 aa). ATP-binding positions include 28–36 and lysine 51; that span reads IGEGTYGVV. Threonine 32 is modified (phosphothreonine). A Phosphotyrosine modification is found at tyrosine 33. Aspartate 146 (proton acceptor) is an active-site residue.

Belongs to the protein kinase superfamily. CMGC Ser/Thr protein kinase family. CDC2/CDKX subfamily. In terms of assembly, forms a stable but non-covalent complex with a regulatory subunit and with a cyclin. Interacts with cks-1. Post-translationally, phosphorylated.

Its subcellular location is the nucleus. It is found in the cytoplasm. It localises to the cytoskeleton. The protein localises to the microtubule organizing center. The protein resides in the centrosome. Its subcellular location is the chromosome. The catalysed reaction is L-seryl-[protein] + ATP = O-phospho-L-seryl-[protein] + ADP + H(+). The enzyme catalyses L-threonyl-[protein] + ATP = O-phospho-L-threonyl-[protein] + ADP + H(+). It catalyses the reaction [DNA-directed RNA polymerase] + ATP = phospho-[DNA-directed RNA polymerase] + ADP + H(+). Phosphorylation both activates and inactivates the enzyme depending on the site of phosphorylation. In terms of biological role, plays a key role in the control of the eukaryotic cell cycle. Required for entry into S-phase and mitosis. Acts as a component of the kinase complex that phosphorylates the repetitive C-terminus of RNA polymerase II. May function in concert with npp-16 to arrest prophase blastomeres in response to anoxia. This chain is Cyclin-dependent kinase 1 (cdk-1), found in Caenorhabditis elegans.